We begin with the raw amino-acid sequence, 142 residues long: Hemoglobin subunit alpha (142 aa).

A Globin domain is found at 2–142; the sequence is VLSSADKNNV…VSTVLTSKYR (141 aa). Ser-4 carries the post-translational modification Phosphoserine. An N6-succinyllysine mark is found at Lys-8 and Lys-12. At Lys-17 the chain carries N6-acetyllysine; alternate. N6-succinyllysine; alternate is present on Lys-17. Phosphotyrosine is present on Tyr-25. Ser-36 bears the Phosphoserine mark. Residue Lys-41 is modified to N6-succinyllysine. At Ser-50 the chain carries Phosphoserine. His-59 contacts O2. His-88 is a binding site for heme b. Ser-103 is modified (phosphoserine). A Phosphothreonine modification is found at Thr-109. Ser-125 bears the Phosphoserine mark. Residues Thr-135 and Thr-138 each carry the phosphothreonine modification. A Phosphoserine modification is found at Ser-139.

The protein belongs to the globin family. In terms of assembly, heterotetramer of two alpha chains and two beta chains. As to expression, red blood cells.

Its function is as follows. Involved in oxygen transport from the lung to the various peripheral tissues. Hemopressin acts as an antagonist peptide of the cannabinoid receptor CNR1. Hemopressin-binding efficiently blocks cannabinoid receptor CNR1 and subsequent signaling. The sequence is that of Hemoglobin subunit alpha (HBA) from Panthera leo (Lion).